The sequence spans 161 residues: Small heat shock protein ibp (161 aa).

In terms of domain architecture, sHSP spans 35-150 (EKPLSDTPAY…KPKKIFINIP (116 aa)).

This sequence belongs to the small heat shock protein (HSP20) family.

This Buchnera aphidicola subsp. Schizaphis graminum (strain Sg) protein is Small heat shock protein ibp (ibp).